The sequence spans 318 residues: NADH-ubiquinone oxidoreductase chain 1 (318 aa).

Transmembrane regions (helical) follow at residues 2 to 22 (FLIN…FLTL), 69 to 89 (FLFT…WAPL), 102 to 122 (LLFI…SGWA), 146 to 166 (MTTI…TAFA), 171 to 191 (HLWL…STLA), 222 to 242 (LFFM…VILF), 253 to 273 (EIST…FLWV), and 294 to 314 (LPLT…LACI).

This sequence belongs to the complex I subunit 1 family. In terms of assembly, core subunit of respiratory chain NADH dehydrogenase (Complex I) which is composed of 45 different subunits.

Its subcellular location is the mitochondrion inner membrane. It carries out the reaction a ubiquinone + NADH + 5 H(+)(in) = a ubiquinol + NAD(+) + 4 H(+)(out). In terms of biological role, core subunit of the mitochondrial membrane respiratory chain NADH dehydrogenase (Complex I) which catalyzes electron transfer from NADH through the respiratory chain, using ubiquinone as an electron acceptor. Essential for the catalytic activity and assembly of complex I. In Elephas maximus (Indian elephant), this protein is NADH-ubiquinone oxidoreductase chain 1 (MT-ND1).